We begin with the raw amino-acid sequence, 398 residues long: 2,3-bisphosphoglycerate-independent phosphoglycerate mutase (398 aa).

It belongs to the BPG-independent phosphoglycerate mutase family. A-PGAM subfamily.

It catalyses the reaction (2R)-2-phosphoglycerate = (2R)-3-phosphoglycerate. The protein operates within carbohydrate degradation; glycolysis; pyruvate from D-glyceraldehyde 3-phosphate: step 3/5. In terms of biological role, catalyzes the interconversion of 2-phosphoglycerate and 3-phosphoglycerate. The protein is 2,3-bisphosphoglycerate-independent phosphoglycerate mutase of Methanosarcina barkeri (strain Fusaro / DSM 804).